The chain runs to 112 residues: B3 domain-containing protein At1g43171 (112 aa).

A DNA-binding region (TF-B3) is located at residues 19-112; sequence DIVGNVALPK…FENKFIVLNF (94 aa).

It localises to the nucleus. The protein is B3 domain-containing protein At1g43171 of Arabidopsis thaliana (Mouse-ear cress).